A 62-amino-acid polypeptide reads, in one-letter code: uncharacterized protein (62 aa).

The chain crosses the membrane as a helical span at residues 15–37; sequence FSSGVLISNFLLFNFIIISHSSL. The segment covering 41–56 has biased composition (low complexity); sequence TTTTTTTTTTTTNTKS. A disordered region spans residues 41 to 62; sequence TTTTTTTTTTTTNTKSTLHRSG.

It localises to the membrane. This is an uncharacterized protein from Dictyostelium discoideum (Social amoeba).